Consider the following 355-residue polypeptide: Ribosomal RNA small subunit methyltransferase H (355 aa).

S-adenosyl-L-methionine contacts are provided by residues 47–49 (GGY), D65, F92, D113, and Q120. Positions 332–355 (LLPLATLPETSHPKSASHSKSRRR) are disordered. Basic residues predominate over residues 346-355 (SASHSKSRRR).

Belongs to the methyltransferase superfamily. RsmH family.

Its subcellular location is the cytoplasm. It carries out the reaction cytidine(1402) in 16S rRNA + S-adenosyl-L-methionine = N(4)-methylcytidine(1402) in 16S rRNA + S-adenosyl-L-homocysteine + H(+). In terms of biological role, specifically methylates the N4 position of cytidine in position 1402 (C1402) of 16S rRNA. This Beijerinckia indica subsp. indica (strain ATCC 9039 / DSM 1715 / NCIMB 8712) protein is Ribosomal RNA small subunit methyltransferase H.